Consider the following 267-residue polypeptide: Hydroxynaphthalene reductase-like protein Arp2 (267 aa).

Residues isoleucine 25, asparagine 45, aspartate 71, and asparagine 98 each contribute to the NADP(+) site. Residues serine 147 and serine 148 each act as proton donor in the active site. Residues tyrosine 162, lysine 166, valine 195, and threonine 197 each coordinate NADP(+). Catalysis depends on tyrosine 162, which acts as the Proton acceptor. Lysine 166 acts as the Lowers pKa of active site Tyr in catalysis.

It belongs to the short-chain dehydrogenases/reductases (SDR) family.

In terms of biological role, hydroxynaphthalene reductase-like protein; part of the Pks2 gene cluster that mediates the formation of infectious structures (appressoria), enabling these fungi to kill insects faster. The product of the Pks2 gene cluster is different from the one of Pks1 and has still not been identified. This is Hydroxynaphthalene reductase-like protein Arp2 from Metarhizium guizhouense (strain ARSEF 977).